Reading from the N-terminus, the 149-residue chain is UPF0260 protein Pfl01_1392 (149 aa).

It belongs to the UPF0260 family.

This Pseudomonas fluorescens (strain Pf0-1) protein is UPF0260 protein Pfl01_1392.